Reading from the N-terminus, the 717-residue chain is Asp/Glu-specific dipeptidyl-peptidase (717 aa).

The first 21 residues, Met1 to Ala21, serve as a signal peptide directing secretion. Catalysis depends on charge relay system residues His85, Asp226, and Ser652.

It belongs to the peptidase S46 family.

The protein resides in the secreted. The protein localises to the cell surface. With respect to regulation, enzyme activity is completely blocked by diisopropyl-fluorophosphates, moderately by phenylmethylsulfonyl fluoride (PMSF) and 4-(2-methyl)benzenesulfonyl fluoride, and slightly by pepstatin in vitro. In terms of biological role, catalyzes the removal of dipeptides from the N-terminus of oligopeptides. Shows a strict specificity for acidic residues (Asp or Glu) in the P1 position, and has a hydrophobic residue preference at the P2 position. Is likely involved in amino acid metabolism and bacterial growth/survival of asaccharolytic P.endodontalis, that utilizes amino acids from extracellular proteinaceous nutrients as energy and carbon sources. In Porphyromonas endodontalis (strain ATCC 35406 / DSM 24491 / JCM 8526 / CCUG 16442 / BCRC 14492 / NCTC 13058 / HG 370) (Bacteroides endodontalis), this protein is Asp/Glu-specific dipeptidyl-peptidase (dpp11).